The sequence spans 359 residues: RuBisCO accumulation factor 1 (359 aa).

Residues 12–195 (LSPEETDALF…RQKIEQLLSD (184 aa)) form an N-terminal alpha-helix region. Positions 219 to 345 (PLLIPVAGSL…VLLVMRPKKI (127 aa)) are C-terminal beta-sheet.

The protein belongs to the RAF family. In terms of assembly, homodimer. Forms an RbcL(8)-Raf1(8) complex. Forms complexes of many stoichiometries with RbcL with and without RbcS. RbcX and Raf1 can bind simultaneously to RbcL.

The protein localises to the cytoplasm. A major RuBisCO chaperone. Acts after GroEL-GroES chaperonin to fold and/or assemble the large subunit of RuBisCO (ccbL, rbcL). Cooperates with RbcX in RbcL folding, plays the major role in assembly of dimers into RbcL(8)-Raf1(8) intermediate complexes. RbcS replaces Raf1, leading to holoenzyme formation. In terms of biological role, raf1 and RbcX are probably functionally redundant; it has been suggested they may cooperate. In Picosynechococcus sp. (strain ATCC 27264 / PCC 7002 / PR-6) (Agmenellum quadruplicatum), this protein is RuBisCO accumulation factor 1.